Consider the following 1027-residue polypeptide: Contactin-5 (1027 aa).

An N-terminal signal peptide occupies residues 1–19 (MMWLSWKLFLFLSLIGCLS). Ig-like C2-type domains are found at residues 32–117 (PDDV…AVLQ), 123–209 (NFSG…RVLS), 227–307 (PKIE…RNVF), 317–401 (PQWV…AELK), 407–494 (PTFP…ASVS), and 498–593 (PTRI…TELL). C50 and C100 are disulfide-bonded. Residues N65 and N123 are each glycosylated (N-linked (GlcNAc...) asparagine). 2 disulfides stabilise this stretch: C144–C196 and C249–C296. N324, N376, and N467 each carry an N-linked (GlcNAc...) asparagine glycan. Cystine bridges form between C338/C385, C430/C478, and C520/C577. Fibronectin type-III domains are found at residues 600–698 (PPGV…TNEA), 703–800 (PPAN…SAEG), 805–899 (APID…TKKS), and 901–994 (PSQA…SYAG). N706, N743, N858, and N929 each carry an N-linked (GlcNAc...) asparagine glycan. The GPI-anchor amidated serine moiety is linked to residue S999. The propeptide at 1000 to 1027 (AQSTLHMFSTSSSSVTLLLVLMVPSTSW) is removed in mature form.

The protein belongs to the immunoglobulin superfamily. Contactin family. In terms of assembly, interacts with INgCAM/L1 and the tenascin-R TNP protein. Does not interacts with NrCAM. As to expression, expressed by subpopulations of Purkinje cells in the cerebellum. Also expressed by one type of Purkinje cell afferents, the climbing fibers.

Its subcellular location is the cell membrane. Functionally, contactins mediate cell surface interactions during nervous system development. May contribute to the formation of somatotopic maps of cerebellar afferents during the development of the nervous system. The chain is Contactin-5 (CNTN5) from Gallus gallus (Chicken).